The chain runs to 398 residues: Argininosuccinate synthase (398 aa).

Residue 8–16 participates in ATP binding; that stretch reads AYSGGLDTS. Tyrosine 87 lines the L-citrulline pocket. Glycine 117 is an ATP binding site. L-aspartate-binding residues include threonine 119, asparagine 123, and aspartate 124. Asparagine 123 lines the L-citrulline pocket. L-citrulline is bound by residues arginine 127, serine 175, glutamate 260, and tyrosine 272.

This sequence belongs to the argininosuccinate synthase family. Type 1 subfamily. As to quaternary structure, homotetramer.

It is found in the cytoplasm. It catalyses the reaction L-citrulline + L-aspartate + ATP = 2-(N(omega)-L-arginino)succinate + AMP + diphosphate + H(+). It functions in the pathway amino-acid biosynthesis; L-arginine biosynthesis; L-arginine from L-ornithine and carbamoyl phosphate: step 2/3. The protein is Argininosuccinate synthase of Mycobacterium tuberculosis (strain ATCC 25618 / H37Rv).